Consider the following 130-residue polypeptide: Small ribosomal subunit protein uS8 (130 aa).

It belongs to the universal ribosomal protein uS8 family. In terms of assembly, part of the 30S ribosomal subunit. Contacts proteins S5 and S12.

One of the primary rRNA binding proteins, it binds directly to 16S rRNA central domain where it helps coordinate assembly of the platform of the 30S subunit. In Aliivibrio fischeri (strain ATCC 700601 / ES114) (Vibrio fischeri), this protein is Small ribosomal subunit protein uS8.